The sequence spans 293 residues: Proteinase T (293 aa).

A propeptide spanning residues 1-12 (EFIEQDAVVTIS) is cleaved from the precursor. Residues 19–293 (PWGLARISSQ…VLINNGEGSA (275 aa)) enclose the Peptidase S8 domain. Disulfide bonds link Cys46–Cys137 and Cys192–Cys262. Active-site charge relay system residues include Asp51, His83, and Ser238.

This sequence belongs to the peptidase S8 family.

In terms of biological role, serine proteinase. This is Proteinase T (PROT) from Parengyodontium album (Tritirachium album).